A 385-amino-acid polypeptide reads, in one-letter code: Lipid-A-disaccharide synthase 2 (385 aa).

It belongs to the LpxB family.

The enzyme catalyses a lipid X + a UDP-2-N,3-O-bis[(3R)-3-hydroxyacyl]-alpha-D-glucosamine = a lipid A disaccharide + UDP + H(+). Its pathway is bacterial outer membrane biogenesis; LPS lipid A biosynthesis. Its function is as follows. Condensation of UDP-2,3-diacylglucosamine and 2,3-diacylglucosamine-1-phosphate to form lipid A disaccharide, a precursor of lipid A, a phosphorylated glycolipid that anchors the lipopolysaccharide to the outer membrane of the cell. This is Lipid-A-disaccharide synthase 2 from Legionella pneumophila subsp. pneumophila (strain Philadelphia 1 / ATCC 33152 / DSM 7513).